We begin with the raw amino-acid sequence, 297 residues long: Alpha-tubulin N-acetyltransferase 1 (297 aa).

The N-acetyltransferase domain occupies 1 to 184 (MDFPYDLNAL…NNFVVFAGFF (184 aa)). Residues 118–131 (FYVT…GYGS) and 154–163 (SPKFLSFLEK) contribute to the acetyl-CoA site. The disordered stretch occupies residues 226–297 (FVRPGGPPHS…SLNRSRLSFH (72 aa)). Pro residues predominate over residues 230-240 (GGPPHSPPLLP). Residues 241–264 (SSPQSRSLSVGSSPSRAPLRPAAA) are compositionally biased toward low complexity. Polar residues-rich tracts occupy residues 266–278 (VLQQ…SPLN) and 286–297 (TSSLNRSRLSFH).

It belongs to the acetyltransferase ATAT1 family. Monomer.

The protein resides in the cytoplasm. Its subcellular location is the membrane. It localises to the clathrin-coated pit. The protein localises to the cell junction. It is found in the focal adhesion. The protein resides in the cell projection. Its subcellular location is the axon. It localises to the cytoskeleton. The protein localises to the spindle. It carries out the reaction L-lysyl-[alpha-tubulin] + acetyl-CoA = N(6)-acetyl-L-lysyl-[alpha-tubulin] + CoA + H(+). Specifically acetylates 'Lys-40' in alpha-tubulin on the lumenal side of microtubules. Promotes microtubule destabilization and accelerates microtubule dynamics; this activity may be independent of acetylation activity. Acetylates alpha-tubulin with a slow enzymatic rate, due to a catalytic site that is not optimized for acetyl transfer. Enters the microtubule through each end and diffuses quickly throughout the lumen of microtubules. Acetylates only long/old microtubules because of its slow acetylation rate since it does not have time to act on dynamically unstable microtubules before the enzyme is released. May be involved in neuron development. Acetylates alpha-tubulin in neurons, but not in cilia. The protein is Alpha-tubulin N-acetyltransferase 1 of Danio rerio (Zebrafish).